The sequence spans 136 residues: General odorant-binding protein 57d (136 aa).

The signal sequence occupies residues Met-1 to Ser-29. 3 disulfide bridges follow: Cys-33/Cys-70, Cys-66/Cys-118, and Cys-107/Cys-127.

It belongs to the PBP/GOBP family.

In terms of biological role, present in the aqueous fluid surrounding olfactory sensory dendrites and are thought to aid in the capture and transport of hydrophobic odorants into and through this fluid. The polypeptide is General odorant-binding protein 57d (Drosophila melanogaster (Fruit fly)).